The chain runs to 352 residues: C-X-C chemokine receptor type 4 (352 aa).

Residues 1-21 (MEGISIYTSDNYTEEMGSGDY) are important for chemokine binding and signaling. The Extracellular portion of the chain corresponds to 1 to 38 (MEGISIYTSDNYTEEMGSGDYDSMKEPCFREENANFNK). Position 7 is a sulfotyrosine (Y7). The N-linked (GlcNAc...) asparagine glycan is linked to N11. Y12 bears the Sulfotyrosine mark. O-linked (Xyl...) (chondroitin sulfate) serine glycosylation is present at S18. Position 21 is a sulfotyrosine (Y21). Disulfide bonds link C28–C274 and C109–C186. The chain crosses the membrane as a helical span at residues 39-63 (IFLPTIYSIIFLTGIVGNGLVILVM). The Cytoplasmic segment spans residues 64–77 (GYQKKLRSMTDKYR). A helical transmembrane segment spans residues 78–99 (LHLSVADLLFVITLPFWAVDAV). Residues 94–97 (WAVD) form a chemokine binding region. Residues 100–110 (ANWYFGNFLCK) are Extracellular-facing. The chain crosses the membrane as a helical span at residues 111 to 130 (AVHVIYTVNLYSSVLILAFI). The segment at 113–117 (HVIYT) is chemokine binding. The Cytoplasmic segment spans residues 131 to 154 (SLDRYLAIVHATNSQRPRKLLAEK). An Important for signaling motif is present at residues 133–135 (DRY). Positions 135-147 (YLAIVHATNSQRP) are involved in dimerization; when bound to chemokine. A helical transmembrane segment spans residues 155–174 (VVYVGVWIPALLLTIPDFIF). Topologically, residues 175–195 (ANVSEADDRYICDRFYPNDLW) are extracellular. Positions 186–190 (CDRFY) are chemokine binding, important for signaling. Residues 191–210 (PNDLWVVVFQFQHIMVGLIL) form an involved in dimerization region. The chain crosses the membrane as a helical span at residues 196-216 (VVVFQFQHIMVGLILPGIVIL). Over 217-241 (SCYCIIISKLSHSKGHQKRKALKTT) the chain is Cytoplasmic. A helical transmembrane segment spans residues 242–261 (VILILAFFACWLPYYIGISI). Over 262-282 (DSFILLEIIKQGCEFENTVHK) the chain is Extracellular. An involved in dimerization region spans residues 266–268 (LLE). The helical transmembrane segment at 283–302 (WISITEALAFFHCCLNPILY) threads the bilayer. Over 303-352 (AFLGAKFKTSAQHALTSVSRGSSLKILSKGKRGGHSSVSTESESSSFHSS) the chain is Cytoplasmic. Residues S319 and S321 each carry the phosphoserine modification. 2 positions are modified to phosphoserine; by PKC and GRK6: S324 and S325. Residues 329–352 (LSKGKRGGHSSVSTESESSSFHSS) form a disordered region. S330 is modified (phosphoserine; by GRK6). A Glycyl lysine isopeptide (Lys-Gly) (interchain with G-Cter in ubiquitin) cross-link involves residue K331. Low complexity predominate over residues 337–352 (HSSVSTESESSSFHSS). A Phosphoserine; by GRK6 modification is found at S339. 2 positions are modified to phosphoserine: S348 and S351.

The protein belongs to the G-protein coupled receptor 1 family. In terms of assembly, monomer. Can form homodimers. Interacts with CD164. Interacts with ARRB2; the interaction is dependent on the C-terminal phosphorylation of CXCR4 and allows activation of MAPK1 and MAPK3. Interacts with ARR3; the interaction is dependent on the C-terminal phosphorylation of CXCR4 and modulates calcium mobilization. Interacts with RNF113A; the interaction, enhanced by CXCL12, promotes CXCR4 ubiquitination and subsequent degradation. Interacts (via the cytoplasmic C-terminal) with ITCH (via the WW domains I and II); the interaction, enhanced by CXCL12, promotes CXCR4 ubiquitination and leads to its degradation. Interacts with extracellular ubiquitin. Interacts with DBN1; this interaction is enhanced by antigenic stimulation. Following LPS binding, may form a complex with GDF5, HSP90AA1 and HSPA8. Post-translationally, phosphorylated on agonist stimulation. Rapidly phosphorylated on serine and threonine residues in the C-terminal. Phosphorylation at Ser-324 and Ser-325 leads to recruitment of ITCH, ubiquitination and protein degradation. In terms of processing, ubiquitinated after ligand binding, leading to its degradation. Ubiquitinated by ITCH at the cell membrane on agonist stimulation. The ubiquitin-dependent mechanism, endosomal sorting complex required for transport (ESCRT), then targets CXCR4 for lysosomal degradation. This process is dependent also on prior Ser-/Thr-phosphorylation in the C-terminal of CXCR4. Also binding of ARRB1 to STAM negatively regulates CXCR4 sorting to lysosomes though modulating ubiquitination of SFR5S. Sulfation is required for efficient binding of CXCL12/SDF-1alpha and promotes its dimerization. Post-translationally, O- and N-glycosylated. N-glycosylation can mask coreceptor function. The O-glycosylation chondroitin sulfate attachment does not affect interaction with CXCL12/SDF-1alpha nor its coreceptor activity.

It localises to the cell membrane. It is found in the cell junction. Its subcellular location is the early endosome. The protein localises to the late endosome. The protein resides in the lysosome. Functionally, receptor for the C-X-C chemokine CXCL12/SDF-1 that transduces a signal by increasing intracellular calcium ion levels and enhancing MAPK1/MAPK3 activation. Involved in the AKT signaling cascade. Plays a role in regulation of cell migration, e.g. during wound healing. Acts as a receptor for extracellular ubiquitin; leading to enhanced intracellular calcium ions and reduced cellular cAMP levels. Binds bacterial lipopolysaccharide (LPS) et mediates LPS-induced inflammatory response, including TNF secretion by monocytes. Involved in hematopoiesis and in cardiac ventricular septum formation. Also plays an essential role in vascularization of the gastrointestinal tract, probably by regulating vascular branching and/or remodeling processes in endothelial cells. Involved in cerebellar development. In the CNS, could mediate hippocampal-neuron survival. The polypeptide is C-X-C chemokine receptor type 4 (CXCR4) (Pan troglodytes (Chimpanzee)).